The sequence spans 288 residues: Shikimate dehydrogenase (NADP(+)) (288 aa).

Shikimate contacts are provided by residues 15-17 and threonine 64; that span reads SKS. Catalysis depends on lysine 68, which acts as the Proton acceptor. Glutamate 83 lines the NADP(+) pocket. The shikimate site is built by asparagine 92 and aspartate 117. NADP(+) is bound by residues 141–145, 165–170, and methionine 232; these read GAGGA and NRTVSK. Residue tyrosine 234 participates in shikimate binding. Glycine 254 provides a ligand contact to NADP(+).

The protein belongs to the shikimate dehydrogenase family. As to quaternary structure, homodimer.

The catalysed reaction is shikimate + NADP(+) = 3-dehydroshikimate + NADPH + H(+). It participates in metabolic intermediate biosynthesis; chorismate biosynthesis; chorismate from D-erythrose 4-phosphate and phosphoenolpyruvate: step 4/7. Its function is as follows. Involved in the biosynthesis of the chorismate, which leads to the biosynthesis of aromatic amino acids. Catalyzes the reversible NADPH linked reduction of 3-dehydroshikimate (DHSA) to yield shikimate (SA). This Psychrobacter cryohalolentis (strain ATCC BAA-1226 / DSM 17306 / VKM B-2378 / K5) protein is Shikimate dehydrogenase (NADP(+)).